Here is a 247-residue protein sequence, read N- to C-terminus: 2,3-bisphosphoglycerate-dependent phosphoglycerate mutase (247 aa).

Substrate is bound by residues 13–20, 26–27, Arg65, 92–95, Lys103, 119–120, and 186–187; these read RHGESDWN, TG, ERHY, RR, and GN. The active-site Tele-phosphohistidine intermediate is the His14. Glu92 (proton donor/acceptor) is an active-site residue.

Belongs to the phosphoglycerate mutase family. BPG-dependent PGAM subfamily. Homotetramer, dimer of dimers.

It carries out the reaction (2R)-2-phosphoglycerate = (2R)-3-phosphoglycerate. Its pathway is carbohydrate degradation; glycolysis; pyruvate from D-glyceraldehyde 3-phosphate: step 3/5. Its function is as follows. Catalyzes the interconversion of 2-phosphoglycerate and 3-phosphoglycerate. The chain is 2,3-bisphosphoglycerate-dependent phosphoglycerate mutase from Mycobacterium leprae (strain Br4923).